The primary structure comprises 400 residues: Subtilisin-like protease 7 (400 aa).

Positions 1-20 (MGFITKAIPLALAAASVING) are cleaved as a signal peptide. Positions 21 to 119 (AEILETRAGV…IERDARVQIN (99 aa)) are excised as a propeptide. The region spanning 36-118 (KYIVVMNDGM…YIERDARVQI (83 aa)) is the Inhibitor I9 domain. In terms of domain architecture, Peptidase S8 spans 129 to 400 (SWGLARVGSK…GKLINNGSGK (272 aa)). Residues Asp-161 and His-192 each act as charge relay system in the active site. Asn-252 carries N-linked (GlcNAc...) asparagine glycosylation. Catalysis depends on Ser-346, which acts as the Charge relay system. Residue Asn-396 is glycosylated (N-linked (GlcNAc...) asparagine).

The protein belongs to the peptidase S8 family.

The protein resides in the secreted. In terms of biological role, secreted subtilisin-like serine protease with keratinolytic activity that contributes to pathogenicity. This Arthroderma gypseum (strain ATCC MYA-4604 / CBS 118893) (Microsporum gypseum) protein is Subtilisin-like protease 7 (SUB7).